The sequence spans 466 residues: 3-isopropylmalate dehydratase large subunit (466 aa).

3 residues coordinate [4Fe-4S] cluster: Cys-347, Cys-407, and Cys-410.

The protein belongs to the aconitase/IPM isomerase family. LeuC type 1 subfamily. Heterodimer of LeuC and LeuD. It depends on [4Fe-4S] cluster as a cofactor.

It carries out the reaction (2R,3S)-3-isopropylmalate = (2S)-2-isopropylmalate. Its pathway is amino-acid biosynthesis; L-leucine biosynthesis; L-leucine from 3-methyl-2-oxobutanoate: step 2/4. Its function is as follows. Catalyzes the isomerization between 2-isopropylmalate and 3-isopropylmalate, via the formation of 2-isopropylmaleate. This Vibrio campbellii (strain ATCC BAA-1116) protein is 3-isopropylmalate dehydratase large subunit.